We begin with the raw amino-acid sequence, 55 residues long: Large ribosomal subunit protein bL33 (55 aa).

It belongs to the bacterial ribosomal protein bL33 family.

This Bordetella pertussis (strain Tohama I / ATCC BAA-589 / NCTC 13251) protein is Large ribosomal subunit protein bL33.